Consider the following 380-residue polypeptide: Guanine nucleotide-binding protein subunit beta (380 aa).

WD repeat units follow at residues 64–103, 106–145, 155–195, 203–243, 247–286, 296–335, and 342–380; these read GHSG…KTHA, LHCP…DRDG, GHKG…RISI, GHTA…RAVR, GHEG…QLQV, NELP…VVLN, and SHEG…RKIV.

The protein belongs to the WD repeat G protein beta family. G proteins are composed of 3 units, alpha, beta and gamma. Interacts with the gamma subunits RGG1 and RGG2.

The protein localises to the cell membrane. Functionally, guanine nucleotide-binding proteins (G proteins) are involved as modulators or transducers in various transmembrane signaling systems. The beta and gamma chains are required for the GTPase activity, for replacement of GDP by GTP, and for G protein-effector interaction. The chain is Guanine nucleotide-binding protein subunit beta from Oryza sativa subsp. indica (Rice).